The following is a 401-amino-acid chain: Bifunctional enzyme IspD/IspF (401 aa).

The tract at residues 1–234 (MQKPPRTAAI…SRLTAALGDI (234 aa)) is 2-C-methyl-D-erythritol 4-phosphate cytidylyltransferase. The 2-C-methyl-D-erythritol 2,4-cyclodiphosphate synthase stretch occupies residues 235 to 401 (RTGTGYDVHA…SPWGAEGQAS (167 aa)). A divalent metal cation-binding residues include Asp-241 and His-243. 4-CDP-2-C-methyl-D-erythritol 2-phosphate is bound by residues 241–243 (DVH) and 267–268 (HS). An a divalent metal cation-binding site is contributed by His-275. Residues 289-291 (DIG), 365-368 (TTSE), Phe-372, and Arg-375 each bind 4-CDP-2-C-methyl-D-erythritol 2-phosphate.

It in the N-terminal section; belongs to the IspD/TarI cytidylyltransferase family. IspD subfamily. In the C-terminal section; belongs to the IspF family. A divalent metal cation serves as cofactor.

The catalysed reaction is 2-C-methyl-D-erythritol 4-phosphate + CTP + H(+) = 4-CDP-2-C-methyl-D-erythritol + diphosphate. It carries out the reaction 4-CDP-2-C-methyl-D-erythritol 2-phosphate = 2-C-methyl-D-erythritol 2,4-cyclic diphosphate + CMP. It participates in isoprenoid biosynthesis; isopentenyl diphosphate biosynthesis via DXP pathway; isopentenyl diphosphate from 1-deoxy-D-xylulose 5-phosphate: step 2/6. It functions in the pathway isoprenoid biosynthesis; isopentenyl diphosphate biosynthesis via DXP pathway; isopentenyl diphosphate from 1-deoxy-D-xylulose 5-phosphate: step 4/6. In terms of biological role, bifunctional enzyme that catalyzes the formation of 4-diphosphocytidyl-2-C-methyl-D-erythritol from CTP and 2-C-methyl-D-erythritol 4-phosphate (MEP) (IspD), and catalyzes the conversion of 4-diphosphocytidyl-2-C-methyl-D-erythritol 2-phosphate (CDP-ME2P) to 2-C-methyl-D-erythritol 2,4-cyclodiphosphate (ME-CPP) with a corresponding release of cytidine 5-monophosphate (CMP) (IspF). The chain is Bifunctional enzyme IspD/IspF from Rhodopseudomonas palustris (strain HaA2).